A 241-amino-acid chain; its full sequence is Protein TraL (241 aa).

It to plasmid R751 TraL.

The chain is Protein TraL (traL) from Escherichia coli.